The sequence spans 274 residues: Type II restriction enzyme HgiEI (274 aa).

Belongs to the TdeIII type II restriction endonuclease family.

It catalyses the reaction Endonucleolytic cleavage of DNA to give specific double-stranded fragments with terminal 5'-phosphates.. Functionally, a P subtype restriction enzyme that recognizes the double-stranded sequence 5'-GGWCC-3' and cleaves after G-1. This system is more active than isoschizomeric RM.HgiBI. The protein is Type II restriction enzyme HgiEI of Herpetosiphon aurantiacus (Herpetosiphon giganteus).